Reading from the N-terminus, the 282-residue chain is 2-dehydro-3-deoxyphosphooctonate aldolase (282 aa).

It belongs to the KdsA family.

The protein resides in the cytoplasm. The enzyme catalyses D-arabinose 5-phosphate + phosphoenolpyruvate + H2O = 3-deoxy-alpha-D-manno-2-octulosonate-8-phosphate + phosphate. The protein operates within carbohydrate biosynthesis; 3-deoxy-D-manno-octulosonate biosynthesis; 3-deoxy-D-manno-octulosonate from D-ribulose 5-phosphate: step 2/3. It participates in bacterial outer membrane biogenesis; lipopolysaccharide biosynthesis. The protein is 2-dehydro-3-deoxyphosphooctonate aldolase of Shewanella baltica (strain OS223).